A 94-amino-acid chain; its full sequence is Aspartyl/glutamyl-tRNA(Asn/Gln) amidotransferase subunit C (94 aa).

The protein belongs to the GatC family. In terms of assembly, heterotrimer of A, B and C subunits.

It catalyses the reaction L-glutamyl-tRNA(Gln) + L-glutamine + ATP + H2O = L-glutaminyl-tRNA(Gln) + L-glutamate + ADP + phosphate + H(+). It carries out the reaction L-aspartyl-tRNA(Asn) + L-glutamine + ATP + H2O = L-asparaginyl-tRNA(Asn) + L-glutamate + ADP + phosphate + 2 H(+). In terms of biological role, allows the formation of correctly charged Asn-tRNA(Asn) or Gln-tRNA(Gln) through the transamidation of misacylated Asp-tRNA(Asn) or Glu-tRNA(Gln) in organisms which lack either or both of asparaginyl-tRNA or glutaminyl-tRNA synthetases. The reaction takes place in the presence of glutamine and ATP through an activated phospho-Asp-tRNA(Asn) or phospho-Glu-tRNA(Gln). The chain is Aspartyl/glutamyl-tRNA(Asn/Gln) amidotransferase subunit C from Campylobacter jejuni subsp. doylei (strain ATCC BAA-1458 / RM4099 / 269.97).